The sequence spans 194 residues: Phosphoheptose isomerase (194 aa).

The SIS domain occupies 37–194; that stretch reads ISNSFKQGGK…LIEFEMAKQA (158 aa). 52–54 serves as a coordination point for substrate; the sequence is NGG. Histidine 61 and glutamate 65 together coordinate Zn(2+). Substrate-binding positions include glutamate 65, 93–94, 119–121, serine 124, and glutamine 172; these read ND and STS. The Zn(2+) site is built by glutamine 172 and histidine 180.

The protein belongs to the SIS family. GmhA subfamily. In terms of assembly, homotetramer. It depends on Zn(2+) as a cofactor.

It is found in the cytoplasm. It carries out the reaction 2 D-sedoheptulose 7-phosphate = D-glycero-alpha-D-manno-heptose 7-phosphate + D-glycero-beta-D-manno-heptose 7-phosphate. It participates in carbohydrate biosynthesis; D-glycero-D-manno-heptose 7-phosphate biosynthesis; D-glycero-alpha-D-manno-heptose 7-phosphate and D-glycero-beta-D-manno-heptose 7-phosphate from sedoheptulose 7-phosphate: step 1/1. In terms of biological role, catalyzes the isomerization of sedoheptulose 7-phosphate in D-glycero-D-manno-heptose 7-phosphate. The protein is Phosphoheptose isomerase of Haemophilus influenzae (strain PittEE).